The primary structure comprises 138 residues: Lymphocyte antigen 6L (138 aa).

Residues 1–16 form the signal peptide; sequence MERLVLTLCTLPLAVA. A glycan (N-linked (GlcNAc...) asparagine) is linked at N27. Residues 28-122 enclose the UPAR/Ly6 domain; the sequence is LSCYQCFKVS…TPQEGRWALR (95 aa). Disulfide bonds link C30-C47 and C103-C108. G117 carries the GPI-anchor amidated glycine lipid modification. Residues 118–138 constitute a propeptide, removed in mature form; sequence RWALRGGLLLQVGLSLLRALL.

The protein localises to the cell membrane. The polypeptide is Lymphocyte antigen 6L (Homo sapiens (Human)).